Reading from the N-terminus, the 259-residue chain is Eukaryotic translation initiation factor 3 subunit J (259 aa).

The interval 1-70 (MAAAAAAAAG…KEEAEVKPEV (70 aa)) is sufficient for interaction with EIF3B. Residues 1-111 (MAAAAAAAAG…EPEESKVLTP (111 aa)) form a disordered region. Phosphoserine occurs at positions 12, 14, and 21. Over residues 41–62 (EGEDEDEDVKDNWDDDDDENKE) the composition is skewed to acidic residues. Basic and acidic residues predominate over residues 63–107 (EAEVKPEVKISEKKKIAEKIKEKERQQKKRQEEIKKRLEEPEESK). Positions 71–136 (KISEKKKIAE…ESDLELAKET (66 aa)) form a coiled coil. K107 participates in a covalent cross-link: Glycyl lysine isopeptide (Lys-Gly) (interchain with G-Cter in SUMO2). At T110 the chain carries Phosphothreonine. S128 carries the phosphoserine modification. The segment at 218-247 (SKAKKKKKGVVPGGGLKATMKDDLADYGGY) is disordered. The interval 244-259 (YGGYDGGYVQDYEDFM) is promotes stable association with the 40S ribosome. Y255 bears the Phosphotyrosine mark.

It belongs to the eIF-3 subunit J family. Component of the eukaryotic translation initiation factor 3 (eIF-3) complex, which is composed of 13 subunits: EIF3A, EIF3B, EIF3C, EIF3D, EIF3E, EIF3F, EIF3G, EIF3H, EIF3I, EIF3J, EIF3K, EIF3L and EIF3M. The eIF-3 complex appears to include 3 stable modules: module A is composed of EIF3A, EIF3B, EIF3G and EIF3I; module B is composed of EIF3F, EIF3H, and EIF3M; and module C is composed of EIF3C, EIF3D, EIF3E, EIF3K and EIF3L. EIF3C of module C binds EIF3B of module A and EIF3H of module B, thereby linking the three modules. EIF3J is a labile subunit that binds to the eIF-3 complex via EIF3B. The eIF-3 complex interacts with RPS6KB1 under conditions of nutrient depletion. Mitogenic stimulation leads to binding and activation of a complex composed of MTOR and RPTOR, leading to phosphorylation and release of RPS6KB1 and binding of EIF4B to eIF-3. In terms of processing, phosphorylated. Phosphorylation is enhanced upon serum stimulation.

The protein resides in the cytoplasm. Its function is as follows. Component of the eukaryotic translation initiation factor 3 (eIF-3) complex, which is required for several steps in the initiation of protein synthesis. The eIF-3 complex associates with the 40S ribosome and facilitates the recruitment of eIF-1, eIF-1A, eIF-2:GTP:methionyl-tRNAi and eIF-5 to form the 43S pre-initiation complex (43S PIC). The eIF-3 complex stimulates mRNA recruitment to the 43S PIC and scanning of the mRNA for AUG recognition. The eIF-3 complex is also required for disassembly and recycling of post-termination ribosomal complexes and subsequently prevents premature joining of the 40S and 60S ribosomal subunits prior to initiation. The eIF-3 complex specifically targets and initiates translation of a subset of mRNAs involved in cell proliferation, including cell cycling, differentiation and apoptosis, and uses different modes of RNA stem-loop binding to exert either translational activation or repression. This subunit binds directly within the mRNA entry channel of the 40S ribosome to the aminoacyl (A) site. It may regulate the interaction between the 43S PIC and mRNA. In Rattus norvegicus (Rat), this protein is Eukaryotic translation initiation factor 3 subunit J (Eif3j).